Here is a 329-residue protein sequence, read N- to C-terminus: MVRLTVHLIAKLGSHSKSSRSESFQQYLRKLTHLNFSDKNIEEIDDLSVCRNLTVLYLYDNQISQICNLGFASNLTHLYMQNNNISCIENLSSLHKLSKLFLGGNSITVVEGLEELKSLKELHVEGQKLPCGEKLAFDPHSISSLSETLCILNISKNNIDELWDLAPLRKMTHLFAADNQLHDIQELETVFSQWFKLRLLDLSRNPVCHKPKYRDRLITVCKFLDDLDGKQINELSRQFLINWKASKDAKKKPEDGKDNKLQVANQLSTSADFHLGPQHPSVRERSSSLSKPSENEKPGVTFRTDQIQADSRGRGTRGDSSTEWQSLKI.

LRR repeat units follow at residues 30-51 (KLTH…SVCR), 52-73 (NLTV…GFAS), 74-95 (NLTH…SSLH), 96-117 (KLSK…EELK), 118-139 (SLKE…AFDP), 148-169 (TLCI…APLR), and 170-191 (KMTH…ETVF). Residues 205 to 243 (NPVCHKPKYRDRLITVCKFLDDLDGKQINELSRQFLINW) form the LRRCT domain. Residues 268–329 (STSADFHLGP…SSTEWQSLKI (62 aa)) are disordered. Polar residues predominate over residues 318–329 (GDSSTEWQSLKI).

The protein resides in the cytoplasm. It localises to the cytoskeleton. The protein localises to the microtubule organizing center. It is found in the centrosome. Its function is as follows. May regulate phosphatase activity of protein phosphatase 1 (PP1) complexes. This is Protein phosphatase 1 regulatory subunit 42 (ppp1r42) from Danio rerio (Zebrafish).